The chain runs to 139 residues: MFVTPIEHAVQKRKKQKQRSVVDPVTRERQLKRNLADLEKDNFSDIRFEIPKDLLQRRVLPISVRRILSSRKTFVNYLDETPNSRYNTCVAKPSYKPPRKFCNVCGYWGKYACQNCGTSYCSKGCEVIHSETRCMKVYA.

Positions 102, 105, 113, 116, 121, 125, 129, and 134 each coordinate Zn(2+). The HIT-type zinc-finger motif lies at 102–134 (CNVCGYWGKYACQNCGTSYCSKGCEVIHSETRC).

As to quaternary structure, component of the SWR1 chromatin-remodeling complex.

It is found in the nucleus. The protein resides in the cytoplasm. Functionally, component of the SWR1 complex which mediates the ATP-dependent exchange of histone H2A for the H2A variant H2A.Z leading to transcriptional regulation of selected genes by chromatin remodeling. The chain is SWR1 complex subunit vps71 (vps71) from Schizosaccharomyces pombe (strain 972 / ATCC 24843) (Fission yeast).